The primary structure comprises 556 residues: MDRRTLTAIVLSFVLLTAFQFYMAWKYPPAELTGEQVQSGESSAPAPLASTAPVADALPPPVEGMAGSAPQQAMSQPLINTDAKSLLHFKNDLVEGSLSLQGGRLVGMDFLQHTDVLGGKPISFMGISQVESFYQESGFLPVAGSAIKAPDANTQWQLIGKESLQGAGEFKLVWDNGEGIVFEKLFSFAQGSYLFKVEDRLINNSAAALGVYHYSQFKRIPVINSQSMLAMSDFQGPMAYLNGERYQHSYEDLTAQDLREKGHGGWTGFSDKYFLAAMVAKPLPPEAQPRRYYFDYDRPNYRVGMVENSVIIPAGQSLAVDYDLFIGPKEISTLERSNLSLERSIDYGWFHFLAEPLVKVLNFFNSVVHNYGVAIILLTLAIKLLFFPLANKSYRSMNAMKKLQPKIEELKKLHGSDRNKMNEAMMKLYQTHKVNPLGGCLPILVQIPVFFALYKVLFLSVEMRHAPFMLWIPDLSAMDPFYVLPLLMGGSMFLQSKLNPTPSDPMQAKIMMFLPVIFTVMFLSFPSGLVLYWLVNNVLSISQQYYIMKKMEHEPS.

The helical transmembrane segment at 5–25 (TLTAIVLSFVLLTAFQFYMAW) threads the bilayer. A disordered region spans residues 36 to 74 (QVQSGESSAPAPLASTAPVADALPPPVEGMAGSAPQQAM). Positions 42-55 (SSAPAPLASTAPVA) are enriched in low complexity. Helical transmembrane passes span 370-390 (NYGV…FPLA), 441-461 (LPIL…FLSV), 468-488 (FMLW…PLLM), and 510-530 (IMMF…SGLV).

It belongs to the OXA1/ALB3/YidC family. Type 1 subfamily. In terms of assembly, interacts with the Sec translocase complex via SecD. Specifically interacts with transmembrane segments of nascent integral membrane proteins during membrane integration.

The protein resides in the cell inner membrane. Functionally, required for the insertion and/or proper folding and/or complex formation of integral membrane proteins into the membrane. Involved in integration of membrane proteins that insert both dependently and independently of the Sec translocase complex, as well as at least some lipoproteins. Aids folding of multispanning membrane proteins. The polypeptide is Membrane protein insertase YidC (Magnetococcus marinus (strain ATCC BAA-1437 / JCM 17883 / MC-1)).